A 349-amino-acid polypeptide reads, in one-letter code: Transmembrane protein 59-like (349 aa).

Positions 1–22 (MDSVALMPLLLLLLLQPPPATP) are cleaved as a signal peptide. Residue N100 is glycosylated (N-linked (GlcNAc...) asparagine). The helical transmembrane segment at 276 to 296 (ILACCLFLSVLVMLWLSCSTL) threads the bilayer. Residues 347-349 (TKL) carry the Microbody targeting signal motif.

Belongs to the TMEM59 family.

The protein resides in the golgi apparatus membrane. Its function is as follows. Modulates the O-glycosylation and complex N-glycosylation steps occurring during the Golgi maturation of APP. Inhibits APP transport to the cell surface and further shedding. In Bos taurus (Bovine), this protein is Transmembrane protein 59-like (TMEM59L).